The following is a 3093-amino-acid chain: Intermembrane lipid transfer protein VPS13A (3093 aa).

Residues F3 to K116 form the Chorein N-terminal domain. One copy of the TPR 1 repeat lies at L373–E406. Phosphoserine is present on S839. An FFAT motif is present at residues E842–C848. S1416 is modified (phosphoserine). The SHR-BD domain maps to V2209–G2454. The TPR 2 repeat unit spans residues I2860–F2898. The required for lipid droplet localization stretch occupies residues P2953 to A3027.

This sequence belongs to the VPS13 family. In terms of assembly, interacts (via FFAT motif) with VAPA and VAPB. Interacts with RAB7A. Interacts with XK.

It localises to the mitochondrion outer membrane. The protein localises to the endoplasmic reticulum membrane. The protein resides in the endosome membrane. Its subcellular location is the lysosome membrane. It is found in the lipid droplet. It localises to the golgi apparatus. The protein localises to the cytoplasmic vesicle. The protein resides in the secretory vesicle. Its subcellular location is the neuronal dense core vesicle. Functionally, mediates the transfer of lipids between membranes at organelle contact sites. Required for the formation or stabilization of ER-mitochondria contact sites which enable transfer of lipids between the ER and mitochondria. Negatively regulates lipid droplet size and motility. Required for efficient lysosomal protein degradation. The polypeptide is Intermembrane lipid transfer protein VPS13A (VPS13A) (Macaca fascicularis (Crab-eating macaque)).